We begin with the raw amino-acid sequence, 423 residues long: Growth hormone-releasing hormone receptor (423 aa).

The signal sequence occupies residues 1–22 (MDGLMWATRILCLLSLCGVTLG). Topologically, residues 23-130 (HLHLECDFIT…KEKSYFSTVK (108 aa)) are extracellular. Intrachain disulfides connect cysteine 41–cysteine 64, cysteine 55–cysteine 96, and cysteine 78–cysteine 112. N-linked (GlcNAc...) asparagine glycosylation is found at asparagine 49 and asparagine 50. Residues 131 to 151 (IIYTTGHSISIVALCVAIAIL) form a helical membrane-spanning segment. Over 152 to 167 (VALRRLHCPRNYIHTQ) the chain is Cytoplasmic. The helical transmembrane segment at 168-188 (LFATFILKASAVFLKDAAIFQ) threads the bilayer. Topologically, residues 189–210 (GDSTDHCSMSTVLCKVSVAISH) are extracellular. The helical transmembrane segment at 211 to 231 (LATMTNFSWLLAEAVYLSCLL) threads the bilayer. The Cytoplasmic portion of the chain corresponds to 232-240 (ASTSPRSKP). The chain crosses the membrane as a helical span at residues 241-261 (AFWWLVLAGWGLPVLCTGTWV). Over 262–283 (GCKLAFEDTECWDLDNSSPCWW) the chain is Extracellular. A helical membrane pass occupies residues 284–304 (IIKGPIVLSVGVNFGLFLNII). At 305–331 (CILLRKLEPAQGGLHTRAQYWRLSKST) the chain is on the cytoplasmic side. A helical transmembrane segment spans residues 332-352 (LLLIPLFGIHYIIFNFLPDSA). At 353 to 357 (GLDIR) the chain is on the extracellular side. The chain crosses the membrane as a helical span at residues 358–378 (VPLELGLGSFQGFIVAVLYCF). The Cytoplasmic segment spans residues 379 to 423 (LNQEVRTEISRKWYGHDPELLPARRTCTEWTTPPRSRLKVLTSEC).

Belongs to the G-protein coupled receptor 2 family. In terms of tissue distribution, pituitary gland.

It is found in the cell membrane. Functionally, receptor for GRF, coupled to G proteins which activate adenylyl cyclase. Stimulates somatotroph cell growth, growth hormone gene transcription and growth hormone secretion. This is Growth hormone-releasing hormone receptor (Ghrhr) from Mus musculus (Mouse).